Consider the following 87-residue polypeptide: Small ribosomal subunit protein bS20 (87 aa).

Over residues 1–15 (MANHKSAAKRARQSI) the composition is skewed to basic residues. The interval 1–29 (MANHKSAAKRARQSIRKTAVNNARKSTVK) is disordered. The span at 19–29 (AVNNARKSTVK) shows a compositional bias: polar residues.

Belongs to the bacterial ribosomal protein bS20 family.

Binds directly to 16S ribosomal RNA. This is Small ribosomal subunit protein bS20 from Bdellovibrio bacteriovorus (strain ATCC 15356 / DSM 50701 / NCIMB 9529 / HD100).